The chain runs to 471 residues: UDP-N-acetylmuramoylalanine--D-glutamate ligase (471 aa).

135–141 (GTNGKTT) is a binding site for ATP.

Belongs to the MurCDEF family.

It localises to the cytoplasm. It carries out the reaction UDP-N-acetyl-alpha-D-muramoyl-L-alanine + D-glutamate + ATP = UDP-N-acetyl-alpha-D-muramoyl-L-alanyl-D-glutamate + ADP + phosphate + H(+). It functions in the pathway cell wall biogenesis; peptidoglycan biosynthesis. Functionally, cell wall formation. Catalyzes the addition of glutamate to the nucleotide precursor UDP-N-acetylmuramoyl-L-alanine (UMA). The sequence is that of UDP-N-acetylmuramoylalanine--D-glutamate ligase from Frankia casuarinae (strain DSM 45818 / CECT 9043 / HFP020203 / CcI3).